A 195-amino-acid chain; its full sequence is dCTP deaminase (195 aa).

DCTP is bound by residues 105 to 110, D123, 131 to 133, Q152, Y166, K173, and Q177; these read RSSLGR and TLE. E133 serves as the catalytic Proton donor/acceptor. A disordered region spans residues 159–195; the sequence is KTPADRPYGAERGSKYQGQSGPQASKIQGDREFGGDQ. A compositionally biased stretch (basic and acidic residues) spans 160 to 172; it reads TPADRPYGAERGS. The span at 174-184 shows a compositional bias: polar residues; sequence YQGQSGPQASK. A compositionally biased stretch (basic and acidic residues) spans 186–195; it reads QGDREFGGDQ.

It belongs to the dCTP deaminase family. As to quaternary structure, homotrimer.

The catalysed reaction is dCTP + H2O + H(+) = dUTP + NH4(+). Its pathway is pyrimidine metabolism; dUMP biosynthesis; dUMP from dCTP (dUTP route): step 1/2. Functionally, catalyzes the deamination of dCTP to dUTP. The sequence is that of dCTP deaminase from Haloarcula marismortui (strain ATCC 43049 / DSM 3752 / JCM 8966 / VKM B-1809) (Halobacterium marismortui).